Reading from the N-terminus, the 57-residue chain is Small hydrophobic protein (57 aa).

Residues 1–8 (MPAIQPPL) lie on the Virion surface side of the membrane. Residues 9–29 (YLTFLLLILLYRIITLYVWVV) traverse the membrane as a helical segment. At 30-57 (STITYKTAVRHAALYQRSLFRWSFDHSL) the chain is on the intravirion side.

This sequence belongs to the rubulavirus small hydrophobic protein family. As to quaternary structure, interacts with host TNFRSF1A, RIPK1 and IRAK1; these interactions interfere with host NF-kappa-B activation at the level of receptor complexes. Interacts with host protein UBQLN4.

The protein localises to the virion membrane. It is found in the host cell membrane. Its function is as follows. Plays a role in the inhibition of the host NF-kappa-B pathway. This inhibition occurs at the receptor level, by preventing the signaling of TNFR1 as well as IL-1R and TLR3. The protein is Small hydrophobic protein (SH) of Mumps virus (strain Belfast) (MuV).